Reading from the N-terminus, the 143-residue chain is Spore coat protein P (143 aa).

A sHSP domain is found at 34–143 (FFDSEASTFV…VETVAFNKGL (110 aa)).

It belongs to the small heat shock protein (HSP20) family.

This chain is Spore coat protein P (cotP), found in Bacillus subtilis (strain 168).